An 85-amino-acid polypeptide reads, in one-letter code: Small cysteine and glycine repeat-containing protein 5 (85 aa).

Residues 4–69 are 10 X 2 AA repeats of CG; it reads CGCGGCGGCG…TCCSCGCGCG (66 aa).

This sequence belongs to the KRTAP type 28 family.

In the hair cortex, hair keratin intermediate filaments are embedded in an interfilamentous matrix, consisting of hair keratin-associated proteins (KRTAP), which are essential for the formation of a rigid and resistant hair shaft through their extensive disulfide bond cross-linking with abundant cysteine residues of hair keratins. The matrix proteins include the high-sulfur and high-glycine-tyrosine keratins. This is Small cysteine and glycine repeat-containing protein 5 from Homo sapiens (Human).